A 379-amino-acid polypeptide reads, in one-letter code: Cytochrome b (379 aa).

4 helical membrane passes run 33–53 (FGSL…FLAM), 77–98 (WTIR…FIHV), 113–133 (WNIG…GYVL), and 178–198 (FFAL…IHLL). Residues His83 and His97 each coordinate heme b. His182 and His196 together coordinate heme b. His201 contributes to the a ubiquinone binding site. 4 helical membrane-spanning segments follow: residues 226-246 (TKDF…TLFY), 288-308 (PGGV…PFLQ), 320-340 (LSQF…WIGG), and 347-367 (FISI…FIMP).

This sequence belongs to the cytochrome b family. The cytochrome bc1 complex contains 11 subunits: 3 respiratory subunits (MT-CYB, CYC1 and UQCRFS1), 2 core proteins (UQCRC1 and UQCRC2) and 6 low-molecular weight proteins (UQCRH/QCR6, UQCRB/QCR7, UQCRQ/QCR8, UQCR10/QCR9, UQCR11/QCR10 and a cleavage product of UQCRFS1). This cytochrome bc1 complex then forms a dimer. The cofactor is heme b.

The protein resides in the mitochondrion inner membrane. Functionally, component of the ubiquinol-cytochrome c reductase complex (complex III or cytochrome b-c1 complex) that is part of the mitochondrial respiratory chain. The b-c1 complex mediates electron transfer from ubiquinol to cytochrome c. Contributes to the generation of a proton gradient across the mitochondrial membrane that is then used for ATP synthesis. The chain is Cytochrome b (MT-CYB) from Lepilemur ruficaudatus (Red-tailed sportive lemur).